The following is a 411-amino-acid chain: Glycogen synthase kinase-3 homolog MsK-2 (411 aa).

Positions 74 to 358 constitute a Protein kinase domain; the sequence is YMAERAVGQG…ALEALVHPFF (285 aa). ATP contacts are provided by residues 80 to 88 and K103; that span reads VGQGSFGVV. D199 acts as the Proton acceptor in catalysis. Y234 bears the Phosphotyrosine mark.

The protein belongs to the protein kinase superfamily. CMGC Ser/Thr protein kinase family. GSK-3 subfamily. Absent in leaves and petioles while a moderate expression is seen in the stems, roots, and nodes.

It carries out the reaction L-seryl-[protein] + ATP = O-phospho-L-seryl-[protein] + ADP + H(+). The enzyme catalyses L-threonyl-[protein] + ATP = O-phospho-L-threonyl-[protein] + ADP + H(+). This is Glycogen synthase kinase-3 homolog MsK-2 (MSK-2) from Medicago sativa (Alfalfa).